The chain runs to 178 residues: Cytochrome b6-f complex iron-sulfur subunit (178 aa).

The chain crosses the membrane as a helical span at residues 20-42 (LLTFGSVTGVALGALYPVVNYFI). In terms of domain architecture, Rieske spans 71–161 (THPAGDRSLV…VSVENDNVFV (91 aa)). The [2Fe-2S] cluster site is built by C107, H109, C125, and H128. The cysteines at positions 112 and 127 are disulfide-linked.

It belongs to the Rieske iron-sulfur protein family. As to quaternary structure, the 4 large subunits of the cytochrome b6-f complex are cytochrome b6, subunit IV (17 kDa polypeptide, PetD), cytochrome f and the Rieske protein, while the 4 small subunits are PetG, PetL, PetM and PetN. The complex functions as a dimer. It depends on [2Fe-2S] cluster as a cofactor.

Its subcellular location is the cellular thylakoid membrane. It carries out the reaction 2 oxidized [plastocyanin] + a plastoquinol + 2 H(+)(in) = 2 reduced [plastocyanin] + a plastoquinone + 4 H(+)(out). Component of the cytochrome b6-f complex, which mediates electron transfer between photosystem II (PSII) and photosystem I (PSI), cyclic electron flow around PSI, and state transitions. This is Cytochrome b6-f complex iron-sulfur subunit from Synechococcus sp. (strain WH7803).